The primary structure comprises 389 residues: Nuclear receptor subfamily 2 group F member 1-B (389 aa).

The tract at residues 19–39 (DDQSAAGREHLQHRHSPKSAE) is disordered. The segment at residues 51 to 126 (HVECVVCGDK…VGMRREAVQR (76 aa)) is a DNA-binding region (nuclear receptor). NR C4-type zinc fingers lie at residues 54 to 74 (CVVCGDKSSGKHYGQFTCEGC) and 90 to 109 (CRANRNCPVDQHHRNQCQYC). Positions 152-378 (YLSGYISLLL…TLIRDMLLSG (227 aa)) constitute an NR LBD domain.

The protein belongs to the nuclear hormone receptor family. NR2 subfamily. In terms of tissue distribution, expressed the retina, where expression is restricted to the outer nuclear layer.

Its subcellular location is the nucleus. Putative transcription factor that is required in photoreceptor cells precursors during eye development. The chain is Nuclear receptor subfamily 2 group F member 1-B from Danio rerio (Zebrafish).